A 228-amino-acid chain; its full sequence is MNKKAWTVLLIEDDPMVQEVNRQFIEQVEGFTVIAAASNGLEGVQLIKQHQPDLTIIDMYMPSQDGLTTLQQIRANGYKTDVIAVTAASDIETVRKVLQYGAVDYIMKPFKFERMKQALEQYRSFQVKISQKEHITQSELDSMLFQQFEEKADLLPKGLNAVTLRRIQQYLSEQNHPISAEEVADGVGIARVTARRYLEFLEQENELKLSVEYGRVGRPINRYMLKIN.

In terms of domain architecture, Response regulatory spans 7-123 (TVLLIEDDPM…RMKQALEQYR (117 aa)). Asp58 carries the 4-aspartylphosphate modification. The H-T-H motif DNA-binding region spans 180-199 (AEEVADGVGIARVTARRYLE).

In terms of processing, phosphorylated by DctS.

Its subcellular location is the cytoplasm. Functionally, member of the two-component regulatory system DctS/DctR. Essential for expression of DctP. The polypeptide is Probable C4-dicarboxylate response regulator DctR (dctR) (Priestia megaterium (Bacillus megaterium)).